The sequence spans 199 residues: Holliday junction branch migration complex subunit RuvA (199 aa).

Positions 1 to 63 are domain I; sequence MIASVRGEVL…EDSMTLYGFT (63 aa). Residues 64–142 form a domain II region; that stretch reads DAETRDLFLT…AAGAAGAPAG (79 aa). Positions 143–153 are flexible linker; sequence AARNGHAVRGP. A domain III region spans residues 153 to 199; that stretch reads PVVEALVGLGFAAKQAEEATDKVLAAEPEAGTSGALRAALSLLGKSR.

It belongs to the RuvA family. Homotetramer. Forms an RuvA(8)-RuvB(12)-Holliday junction (HJ) complex. HJ DNA is sandwiched between 2 RuvA tetramers; dsDNA enters through RuvA and exits via RuvB. An RuvB hexamer assembles on each DNA strand where it exits the tetramer. Each RuvB hexamer is contacted by two RuvA subunits (via domain III) on 2 adjacent RuvB subunits; this complex drives branch migration. In the full resolvosome a probable DNA-RuvA(4)-RuvB(12)-RuvC(2) complex forms which resolves the HJ.

It localises to the cytoplasm. Functionally, the RuvA-RuvB-RuvC complex processes Holliday junction (HJ) DNA during genetic recombination and DNA repair, while the RuvA-RuvB complex plays an important role in the rescue of blocked DNA replication forks via replication fork reversal (RFR). RuvA specifically binds to HJ cruciform DNA, conferring on it an open structure. The RuvB hexamer acts as an ATP-dependent pump, pulling dsDNA into and through the RuvAB complex. HJ branch migration allows RuvC to scan DNA until it finds its consensus sequence, where it cleaves and resolves the cruciform DNA. In Mycobacterium avium (strain 104), this protein is Holliday junction branch migration complex subunit RuvA.